Consider the following 433-residue polypeptide: Tol-Pal system protein TolB (433 aa).

Residues 1–21 (MINLFRGLLVVLCFASAMVAA) form the signal peptide.

The protein belongs to the TolB family. As to quaternary structure, the Tol-Pal system is composed of five core proteins: the inner membrane proteins TolA, TolQ and TolR, the periplasmic protein TolB and the outer membrane protein Pal. They form a network linking the inner and outer membranes and the peptidoglycan layer.

Its subcellular location is the periplasm. Part of the Tol-Pal system, which plays a role in outer membrane invagination during cell division and is important for maintaining outer membrane integrity. The sequence is that of Tol-Pal system protein TolB from Pseudomonas syringae pv. tomato (strain ATCC BAA-871 / DC3000).